Here is a 515-residue protein sequence, read N- to C-terminus: 2-isopropylmalate synthase (515 aa).

The Pyruvate carboxyltransferase domain maps to 5-267 (VIIFDTTLRD…DTRINTQEIH (263 aa)). Aspartate 14, histidine 202, histidine 204, and asparagine 238 together coordinate Mn(2+). The interval 392–515 (VLDKLSAHST…VADIKSHKHH (124 aa)) is regulatory domain.

The protein belongs to the alpha-IPM synthase/homocitrate synthase family. LeuA type 1 subfamily. Homodimer. It depends on Mn(2+) as a cofactor.

It is found in the cytoplasm. It carries out the reaction 3-methyl-2-oxobutanoate + acetyl-CoA + H2O = (2S)-2-isopropylmalate + CoA + H(+). It participates in amino-acid biosynthesis; L-leucine biosynthesis; L-leucine from 3-methyl-2-oxobutanoate: step 1/4. Its function is as follows. Catalyzes the condensation of the acetyl group of acetyl-CoA with 3-methyl-2-oxobutanoate (2-ketoisovalerate) to form 3-carboxy-3-hydroxy-4-methylpentanoate (2-isopropylmalate). The chain is 2-isopropylmalate synthase from Haemophilus influenzae (strain 86-028NP).